The chain runs to 258 residues: Glucosamine-6-phosphate deaminase (258 aa).

The active-site Proton acceptor; for enolization step is the Asp-65. Asp-134 serves as the catalytic For ring-opening step. Residue His-136 is the Proton acceptor; for ring-opening step of the active site. The active-site For ring-opening step is the Glu-141.

Belongs to the glucosamine/galactosamine-6-phosphate isomerase family. NagB subfamily.

The enzyme catalyses alpha-D-glucosamine 6-phosphate + H2O = beta-D-fructose 6-phosphate + NH4(+). Its pathway is amino-sugar metabolism; N-acetylneuraminate degradation; D-fructose 6-phosphate from N-acetylneuraminate: step 5/5. Its function is as follows. Catalyzes the reversible isomerization-deamination of glucosamine 6-phosphate (GlcN6P) to form fructose 6-phosphate (Fru6P) and ammonium ion. The sequence is that of Glucosamine-6-phosphate deaminase from Corynebacterium kroppenstedtii (strain DSM 44385 / JCM 11950 / CIP 105744 / CCUG 35717).